The sequence spans 122 residues: Large ribosomal subunit protein uL14c (122 aa).

It belongs to the universal ribosomal protein uL14 family. In terms of assembly, part of the 50S ribosomal subunit.

The protein resides in the plastid. It is found in the chloroplast. Functionally, binds to 23S rRNA. This Welwitschia mirabilis (Tree tumbo) protein is Large ribosomal subunit protein uL14c.